The sequence spans 199 residues: Nucleoside triphosphate pyrophosphatase (199 aa).

Residue Asp-76 is the Proton acceptor of the active site.

Belongs to the Maf family. It depends on a divalent metal cation as a cofactor.

The protein localises to the cytoplasm. It catalyses the reaction a ribonucleoside 5'-triphosphate + H2O = a ribonucleoside 5'-phosphate + diphosphate + H(+). The enzyme catalyses a 2'-deoxyribonucleoside 5'-triphosphate + H2O = a 2'-deoxyribonucleoside 5'-phosphate + diphosphate + H(+). Functionally, nucleoside triphosphate pyrophosphatase. May have a dual role in cell division arrest and in preventing the incorporation of modified nucleotides into cellular nucleic acids. The chain is Nucleoside triphosphate pyrophosphatase from Roseobacter denitrificans (strain ATCC 33942 / OCh 114) (Erythrobacter sp. (strain OCh 114)).